Here is an 872-residue protein sequence, read N- to C-terminus: MVANGHFAGVGDVLDAKNYEHGVQVIDEEKEFNPNLSNYLSYENVTPAGFNYHLISVFGSQSTGKSTLLNSLFGTHFSVMSETERRQTTKGIWLSKNKRLKSDKGQDNQTKMADNILVMDVEGTDGRERGEDQDFERKSALFALATSEVLIVNIWEHQVGLYQGANMGLLKTVFEVNLELFLKDKRSNPRSLLFFVIRDFLGTTPLQNLQNTLLQDLNRIWNSLSKPAGLENSSITDYFDFAFAGLPHKNFQPEKFVDEVRKLSTRFCDGHRDPNKTDAKGTSSIEGGIFLPEYHRRIPADGFAVYAEGIWDQIVNNKDLDLPTQQELLAQFRCDEISREVLVAFDEAISPFEAKQAEAVQAGNPQVLGGLGSAMCNARMKSVKNFDTEASRYHKRVYQMKKSELQDKIDSRLKALFLGQLSAAHRSGIQEFTESVTAAVKAGQKRGASYDFAEIVTKERKLAIEKFEKEARAAVVEDTQWSNYQQELSLYQKDLENIGGQLRRDEMRRLATRVGRWVRSRLGESIDLEFNAIGSGRGGSGAPEFGDKPSEKSLWDRVWTLFVDTVLDAERRFTERASSFDASIDEVDVGLWRLRRKSWGVLRAKIEEEMMEGNILLKLRENFEDKFRYDDAGVPRIWRPNDDIESIYTRARESTLTLIPLLSRFRLAETNAPPPLDKWIGHTPSSATPADEEDLTPIGGVDEDEGKSLEEEMTMIGEAKKQDLTVRFKKTADGVYVEAKRSAIGGITQVPLYFYGLLLALGWNEIVAVLRNPAYFLLLFVCAVTAYVTYQLNLWGPIIKMTEAASQQALMEGKRRLREFLEASDTGLQAMAMSEGRNAEEYDMSNMKNRKSAGGFQNNRSHIDDADDDDDF.

Residues 1-749 (MVANGHFAGV…KRSAIGGITQ (749 aa)) are Cytoplasmic-facing. Positions 49-294 (GFNYHLISVF…IEGGIFLPEY (246 aa)) constitute a GB1/RHD3-type G domain. 59 to 66 (GSQSTGKS) serves as a coordination point for GTP. A coiled-coil region spans residues 482 to 504 (SNYQQELSLYQKDLENIGGQLRR). The disordered stretch occupies residues 676 to 704 (LDKWIGHTPSSATPADEEDLTPIGGVDED). The span at 690–704 (ADEEDLTPIGGVDED) shows a compositional bias: acidic residues. The helical transmembrane segment at 750–770 (VPLYFYGLLLALGWNEIVAVL) threads the bilayer. At 771–773 (RNP) the chain is on the lumenal side. Residues 774–794 (AYFLLLFVCAVTAYVTYQLNL) traverse the membrane as a helical segment. The Cytoplasmic portion of the chain corresponds to 795-872 (WGPIIKMTEA…IDDADDDDDF (78 aa)). The interval 849-872 (NRKSAGGFQNNRSHIDDADDDDDF) is disordered.

The protein belongs to the TRAFAC class dynamin-like GTPase superfamily. GB1/RHD3 GTPase family. RHD3 subfamily.

The protein resides in the endoplasmic reticulum membrane. Functionally, cooperates with the reticulon proteins and tubule-shaping DP1 family proteins to generate and maintain the structure of the tubular endoplasmic reticulum network. Has GTPase activity, which is required for its function in ER organization. This is Protein SEY1 from Paracoccidioides brasiliensis (strain Pb03).